The primary structure comprises 206 residues: Probable nicotinate-nucleotide adenylyltransferase (206 aa).

The protein belongs to the NadD family.

The enzyme catalyses nicotinate beta-D-ribonucleotide + ATP + H(+) = deamido-NAD(+) + diphosphate. It participates in cofactor biosynthesis; NAD(+) biosynthesis; deamido-NAD(+) from nicotinate D-ribonucleotide: step 1/1. In terms of biological role, catalyzes the reversible adenylation of nicotinate mononucleotide (NaMN) to nicotinic acid adenine dinucleotide (NaAD). The polypeptide is Probable nicotinate-nucleotide adenylyltransferase (Paenarthrobacter aurescens (strain TC1)).